We begin with the raw amino-acid sequence, 164 residues long: Histone H3-like centromeric protein CENH3 (164 aa).

Basic residues predominate over residues 1-11 (MARTKHPAVRK). The interval 1–71 (MARTKHPAVR…QRKPHRFRPG (71 aa)) is disordered. The residue at position 5 (Lys5) is an N6,N6,N6-trimethyllysine; alternate. Lys5 is modified (N6,N6-dimethyllysine; alternate). 3 positions are modified to N6-methyllysine; alternate: Lys5, Lys19, and Lys30. A compositionally biased stretch (basic and acidic residues) spans 12–26 (SKAEPKKKLQFERSP). Lys19 bears the N6-acetyllysine; alternate mark. Position 30 is an N6,N6,N6-trimethyllysine; alternate (Lys30). Lys30 bears the N6,N6-dimethyllysine; alternate mark. Positions 40–55 (TSATTRSAAGTSASGT) are enriched in low complexity. Positions 60–69 (TKQRKPHRFR) are enriched in basic residues.

This sequence belongs to the histone H3 family.

It is found in the chromosome. The protein localises to the centromere. Its subcellular location is the kinetochore. Functionally, histone H3-like variant which exclusively replaces conventional H3 in the nucleosome core of centromeric chromatin at the inner plate of the kinetochore. Required for recruitment and assembly of kinetochore proteins, mitotic progression and chromosome segregation. The chain is Histone H3-like centromeric protein CENH3 from Oryza sativa subsp. japonica (Rice).